The following is a 595-amino-acid chain: Leiomodin-1 (595 aa).

Disordered stretches follow at residues 1 to 322 (MSKV…KVKN) and 467 to 568 (DKQR…QEKN). The residue at position 12 (Ser-12) is a Phosphoserine. Positions 27 to 40 (EEMEELEKELDVVD) are enriched in acidic residues. 8 stretches are compositionally biased toward basic and acidic residues: residues 72–105 (CEKE…EDKG), 117–127 (QDSDVGKEPKK), 134–193 (FSRD…EKTG), 201–224 (SRDK…KLTA), 232–251 (RQED…KPEV), 259–289 (RDSR…REKQ), 467–476 (DKQRQKRLQE), and 484–493 (SGEKKDRLEV). A Phosphoserine modification is found at Ser-85. At Ser-135 the chain carries Phosphoserine. 8 consecutive repeat copies span residues 165-180 (AAVD…REER), 181-196 (AAAT…GSVR), 197-212 (NAGL…EEVK), 213-227 (EPSK…AENR), 228-243 (STVG…ESRE), 244-257 (DRDK…IGCG), 258-273 (SRDS…KEET), and 274-288 (QPDK…TREK). The 8 X approximate tandem repeats stretch occupies residues 165-288 (AAVDRKEAGK…VREEGKTREK (124 aa)). Composition is skewed to pro residues over residues 503–513 (SPKPSPQPSPK) and 527–538 (AAPPPPPPPLAP). The tract at residues 503 to 522 (SPKPSPQPSPKSAPKNSPKK) is 5 X 4 AA approximate tandem repeats. The residue at position 550 (Ser-550) is a Phosphoserine. A WH2 domain is found at 569–588 (SRDQLLAAIRSSNLKQLKKV).

In terms of tissue distribution, detected in smooth muscle, in stomach and uterus, blood vessel wall, and in slow fibers in extraocular muscle, urinary bladder and sternothyroid muscle (at protein level).

It is found in the cytoplasm. The protein localises to the myofibril. Its subcellular location is the sarcomere. The protein resides in the cytoskeleton. In terms of biological role, required for proper contractility of visceral smooth muscle cells. Mediates nucleation of actin filaments. This chain is Leiomodin-1, found in Rattus norvegicus (Rat).